The following is a 110-amino-acid chain: Large ribosomal subunit protein uL22 (110 aa).

Belongs to the universal ribosomal protein uL22 family. As to quaternary structure, part of the 50S ribosomal subunit.

Functionally, this protein binds specifically to 23S rRNA; its binding is stimulated by other ribosomal proteins, e.g. L4, L17, and L20. It is important during the early stages of 50S assembly. It makes multiple contacts with different domains of the 23S rRNA in the assembled 50S subunit and ribosome. In terms of biological role, the globular domain of the protein is located near the polypeptide exit tunnel on the outside of the subunit, while an extended beta-hairpin is found that lines the wall of the exit tunnel in the center of the 70S ribosome. This Solidesulfovibrio magneticus (strain ATCC 700980 / DSM 13731 / RS-1) (Desulfovibrio magneticus) protein is Large ribosomal subunit protein uL22.